A 425-amino-acid chain; its full sequence is 2-methylserine hydroxymethyltransferase (425 aa).

Residues Leu126 and 130 to 132 (GHL) contribute to the (6S)-5,6,7,8-tetrahydrofolate site. An N6-(pyridoxal phosphate)lysine modification is found at Lys235. A (6S)-5,6,7,8-tetrahydrofolate-binding site is contributed by Glu251.

Belongs to the SHMT family. In terms of assembly, homodimer. It depends on pyridoxal 5'-phosphate as a cofactor.

Its subcellular location is the cytoplasm. The enzyme catalyses (6R)-5,10-methylene-5,6,7,8-tetrahydrofolate + D-alanine + H2O = 2-methylserine + (6S)-5,6,7,8-tetrahydrofolate. The protein operates within one-carbon metabolism; tetrahydrofolate interconversion. In terms of biological role, catalyzes the reversible interconversion of alpha-methyl-L-serine to D-alanine with tetrahydrofolate (THF) serving as the one-carbon carrier. Cannot use alpha-methyl-D-serine, L-serine, D-serine or L-alanine. The chain is 2-methylserine hydroxymethyltransferase from Ensifer sp.